We begin with the raw amino-acid sequence, 291 residues long: Small ribosomal subunit protein uS2 (291 aa).

Residues 256–291 form a disordered region; the sequence is STTAPPNWEATGGDWATSTAPAEGWAGDAPAGETKW.

This sequence belongs to the universal ribosomal protein uS2 family. Component of the small ribosomal subunit. Mature ribosomes consist of a small (40S) and a large (60S) subunit. The 40S subunit contains about 33 different proteins and 1 molecule of RNA (18S). The 60S subunit contains about 49 different proteins and 3 molecules of RNA (25S, 5.8S and 5S). Interacts with RPS21.

It is found in the cytoplasm. Its function is as follows. Required for the assembly and/or stability of the 40S ribosomal subunit. Required for the processing of the 20S rRNA-precursor to mature 18S rRNA in a late step of the maturation of 40S ribosomal subunits. This is Small ribosomal subunit protein uS2 from Coccidioides immitis (strain RS) (Valley fever fungus).